The primary structure comprises 200 residues: Recombination protein RecR (200 aa).

The C4-type zinc finger occupies 59 to 74; that stretch reads CSVCGSLDTSDPCAIC. Residues 82–177 enclose the Toprim domain; the sequence is RLLCVVEEVG…SVTMLARGVP (96 aa).

This sequence belongs to the RecR family.

Its function is as follows. May play a role in DNA repair. It seems to be involved in an RecBC-independent recombinational process of DNA repair. It may act with RecF and RecO. This is Recombination protein RecR from Caulobacter sp. (strain K31).